A 346-amino-acid polypeptide reads, in one-letter code: Eukaryotic translation initiation factor 3 subunit I (346 aa).

WD repeat units lie at residues 8-49, 50-91, 145-184, 189-228, and 286-325; these read GHER…GTYH, GHQG…KTWD, CEDS…LLYN, ELNQ…VLKT, and GHFG…FDFM.

This sequence belongs to the eIF-3 subunit I family. Component of the eukaryotic translation initiation factor 3 (eIF-3) complex.

It is found in the cytoplasm. In terms of biological role, component of the eukaryotic translation initiation factor 3 (eIF-3) complex, which is involved in protein synthesis of a specialized repertoire of mRNAs and, together with other initiation factors, stimulates binding of mRNA and methionyl-tRNAi to the 40S ribosome. The eIF-3 complex specifically targets and initiates translation of a subset of mRNAs involved in cell proliferation. This chain is Eukaryotic translation initiation factor 3 subunit I (tif-34), found in Neurospora crassa (strain ATCC 24698 / 74-OR23-1A / CBS 708.71 / DSM 1257 / FGSC 987).